Consider the following 383-residue polypeptide: Acetylornithine deacetylase (383 aa).

His80 contacts Zn(2+). Asp82 is an active-site residue. Asp112 is a Zn(2+) binding site. Residue Glu144 is part of the active site. Positions 145, 169, and 355 each coordinate Zn(2+).

This sequence belongs to the peptidase M20A family. ArgE subfamily. In terms of assembly, homodimer. Zn(2+) serves as cofactor. Co(2+) is required as a cofactor. The cofactor is glutathione.

The protein localises to the cytoplasm. The catalysed reaction is N(2)-acetyl-L-ornithine + H2O = L-ornithine + acetate. Its pathway is amino-acid biosynthesis; L-arginine biosynthesis; L-ornithine from N(2)-acetyl-L-ornithine (linear): step 1/1. Functionally, catalyzes the hydrolysis of the amide bond of N(2)-acetylated L-amino acids. Cleaves the acetyl group from N-acetyl-L-ornithine to form L-ornithine, an intermediate in L-arginine biosynthesis pathway, and a branchpoint in the synthesis of polyamines. The sequence is that of Acetylornithine deacetylase from Salmonella paratyphi A (strain ATCC 9150 / SARB42).